The following is a 374-amino-acid chain: Isopentenyl-diphosphate delta-isomerase (374 aa).

13–14 (RK) lines the substrate pocket. FMN-binding positions include 71-73 (GMT), serine 104, and asparagine 132. 104–106 (SQR) lines the substrate pocket. Residue glutamine 171 coordinates substrate. Glutamate 172 is a Mg(2+) binding site. FMN contacts are provided by residues lysine 203, threonine 233, 282–284 (GMR), and 303–304 (AL).

The protein belongs to the IPP isomerase type 2 family. In terms of assembly, homooctamer. Dimer of tetramers. FMN serves as cofactor. NADPH is required as a cofactor. It depends on Mg(2+) as a cofactor.

The protein localises to the cytoplasm. The enzyme catalyses isopentenyl diphosphate = dimethylallyl diphosphate. In terms of biological role, involved in the biosynthesis of isoprenoids. Catalyzes the 1,3-allylic rearrangement of the homoallylic substrate isopentenyl (IPP) to its allylic isomer, dimethylallyl diphosphate (DMAPP). The protein is Isopentenyl-diphosphate delta-isomerase of Thermococcus kodakarensis (strain ATCC BAA-918 / JCM 12380 / KOD1) (Pyrococcus kodakaraensis (strain KOD1)).